A 297-amino-acid chain; its full sequence is Bifunctional protein FolD (297 aa).

NADP(+)-binding positions include 167-169 and Ile233; that span reads GRS.

This sequence belongs to the tetrahydrofolate dehydrogenase/cyclohydrolase family. In terms of assembly, homodimer.

It catalyses the reaction (6R)-5,10-methylene-5,6,7,8-tetrahydrofolate + NADP(+) = (6R)-5,10-methenyltetrahydrofolate + NADPH. The catalysed reaction is (6R)-5,10-methenyltetrahydrofolate + H2O = (6R)-10-formyltetrahydrofolate + H(+). It participates in one-carbon metabolism; tetrahydrofolate interconversion. Functionally, catalyzes the oxidation of 5,10-methylenetetrahydrofolate to 5,10-methenyltetrahydrofolate and then the hydrolysis of 5,10-methenyltetrahydrofolate to 10-formyltetrahydrofolate. The protein is Bifunctional protein FolD of Zymomonas mobilis subsp. mobilis (strain ATCC 31821 / ZM4 / CP4).